A 1481-amino-acid chain; its full sequence is RNA helicase aquarius (1481 aa).

Residues 1 to 416 (MAAPAQPKKI…LVSRHERRIS (416 aa)) form a helical region with structural similarity to ARM repeat domains region. The required for assembly of the IB complex stretch occupies residues 417–1481 (QIQQLNQMPL…DAESVPTETE (1065 aa)). The segment at 754–773 (RSGKGKKRKDADGEEDDTEE) is disordered. ATP-binding positions include Gln-801, Gln-806, and 826 to 831 (GTGKTD). The residue at position 1055 (Lys-1055) is an N6-acetyllysine. Residues 1396–1414 (EEGEEGQSQETEMEAEEET) show a composition bias toward acidic residues. The interval 1396-1481 (EEGEEGQSQE…DAESVPTETE (86 aa)) is disordered. The segment covering 1418–1448 (QGNLTPSPADASLSQETPAAQPDCSSQTEDT) has biased composition (polar residues). The segment covering 1455-1468 (ATAAEPVSAAAEAA) has biased composition (low complexity).

This sequence belongs to the CWF11 family. As to quaternary structure, identified in the spliceosome C complex. Component of the XAB2 complex, a multimeric protein complex composed of XAB2, PRPF19, AQR, ZNF830, ISY1, and PPIE. Identified in a pentameric intron-binding (IB) complex composed of AQR, XAB2, ISY1, ZNF830 and PPIE that is incorporated into the spliceosome as a preassembled complex. The IB complex does not contain PRPF19. Within the spliceosome, interacts with SNRPA1, SF3B1, SF3B3, SF3A1 and SF3A2.

It localises to the nucleus. Its subcellular location is the nucleoplasm. It catalyses the reaction ATP + H2O = ADP + phosphate + H(+). Its function is as follows. Involved in pre-mRNA splicing as component of the spliceosome. Intron-binding spliceosomal protein required to link pre-mRNA splicing and snoRNP (small nucleolar ribonucleoprotein) biogenesis. Plays a key role in position-dependent assembly of intron-encoded box C/D small snoRNP, splicing being required for snoRNP assembly. May act by helping the folding of the snoRNA sequence. Binds to intron of pre-mRNAs in a sequence-independent manner, contacting the region between snoRNA and the branchpoint of introns (40 nucleotides upstream of the branchpoint) during the late stages of splicing. Has ATP-dependent RNA helicase activity and can unwind double-stranded RNA molecules with a 3' overhang (in vitro). The sequence is that of RNA helicase aquarius (Aqr) from Mus musculus (Mouse).